The chain runs to 334 residues: Ornithine carbamoyltransferase, catabolic (334 aa).

Residues 57–60, glutamine 84, arginine 108, and 135–138 each bind carbamoyl phosphate; these read STRT and HPTQ. Residues asparagine 168, aspartate 232, and 236-237 each bind L-ornithine; that span reads SM. Carbamoyl phosphate is bound by residues 274–275 and arginine 321; that span reads CL.

The protein belongs to the aspartate/ornithine carbamoyltransferase superfamily. OTCase family.

It localises to the cytoplasm. The enzyme catalyses carbamoyl phosphate + L-ornithine = L-citrulline + phosphate + H(+). The protein operates within amino-acid degradation; L-arginine degradation via ADI pathway; carbamoyl phosphate from L-arginine: step 2/2. In terms of biological role, reversibly catalyzes the transfer of the carbamoyl group from carbamoyl phosphate (CP) to the N(epsilon) atom of ornithine (ORN) to produce L-citrulline. This is Ornithine carbamoyltransferase, catabolic (arcB) from Avibacterium paragallinarum (Haemophilus gallinarum).